An 81-amino-acid polypeptide reads, in one-letter code: MNVDHEVNLLVEEIRRLGSKGNDGKLSVKFGVLFSDDKCANLFEALVGTLKAAKKRKIVTYQGELLLQGVHDNVDIVLLQD.

The protein belongs to the costars family.

In Xenopus tropicalis (Western clawed frog), this protein is Costars family protein ABRACL (abracl).